The chain runs to 45 residues: Large ribosomal subunit protein bL34 (45 aa).

Over residues 1–10 (MTKRTLEGTN) the composition is skewed to basic and acidic residues. A disordered region spans residues 1-27 (MTKRTLEGTNRKRKRTSGFRARMRSAT). A compositionally biased stretch (basic residues) spans 11–23 (RKRKRTSGFRARM).

It belongs to the bacterial ribosomal protein bL34 family.

In Synechococcus elongatus (strain ATCC 33912 / PCC 7942 / FACHB-805) (Anacystis nidulans R2), this protein is Large ribosomal subunit protein bL34.